The chain runs to 373 residues: Carnosine N-methyltransferase (373 aa).

Residues glutamine 110, arginine 113, glycine 154, glutamate 175, aspartate 242, phenylalanine 243, and cysteine 262 each contribute to the S-adenosyl-L-methionine site. Residue aspartate 266 coordinates carnosine. Residue tyrosine 274 coordinates S-adenosyl-L-methionine. Histidine 297 and tyrosine 356 together coordinate carnosine.

The protein belongs to the carnosine N-methyltransferase family.

It localises to the cytoplasm. The protein localises to the nucleus. It carries out the reaction carnosine + S-adenosyl-L-methionine = anserine + S-adenosyl-L-homocysteine + H(+). In terms of biological role, N-methyltransferase that mediates the formation of anserine (beta-alanyl-N(Pi)-methyl-L-histidine) from carnosine. Also methylates other L-histidine-containing di- and tripeptides such as Gly-Gly-His, Gly-His and homocarnosine (GABA-His). The polypeptide is Carnosine N-methyltransferase (Schizosaccharomyces pombe (strain 972 / ATCC 24843) (Fission yeast)).